Here is a 213-residue protein sequence, read N- to C-terminus: Protein-L-isoaspartate O-methyltransferase (213 aa).

S60 is a catalytic residue.

It belongs to the methyltransferase superfamily. L-isoaspartyl/D-aspartyl protein methyltransferase family.

It localises to the cytoplasm. The catalysed reaction is [protein]-L-isoaspartate + S-adenosyl-L-methionine = [protein]-L-isoaspartate alpha-methyl ester + S-adenosyl-L-homocysteine. Its function is as follows. Catalyzes the methyl esterification of L-isoaspartyl residues in peptides and proteins that result from spontaneous decomposition of normal L-aspartyl and L-asparaginyl residues. It plays a role in the repair and/or degradation of damaged proteins. In Roseobacter denitrificans (strain ATCC 33942 / OCh 114) (Erythrobacter sp. (strain OCh 114)), this protein is Protein-L-isoaspartate O-methyltransferase.